Consider the following 350-residue polypeptide: Ribosomal RNA small subunit methyltransferase C (350 aa).

Belongs to the methyltransferase superfamily. RsmC family. As to quaternary structure, monomer.

The protein resides in the cytoplasm. The enzyme catalyses guanosine(1207) in 16S rRNA + S-adenosyl-L-methionine = N(2)-methylguanosine(1207) in 16S rRNA + S-adenosyl-L-homocysteine + H(+). Specifically methylates the guanine in position 1207 of 16S rRNA in the 30S particle. This Sodalis glossinidius (strain morsitans) protein is Ribosomal RNA small subunit methyltransferase C.